The following is a 448-amino-acid chain: Phosphoglucosamine mutase (448 aa).

Ser-99 serves as the catalytic Phosphoserine intermediate. The Mg(2+) site is built by Ser-99, Asp-239, Asp-241, and Asp-243. A Phosphoserine modification is found at Ser-99.

It belongs to the phosphohexose mutase family. Requires Mg(2+) as cofactor. In terms of processing, activated by phosphorylation.

It catalyses the reaction alpha-D-glucosamine 1-phosphate = D-glucosamine 6-phosphate. Its function is as follows. Catalyzes the conversion of glucosamine-6-phosphate to glucosamine-1-phosphate. In Lachnoclostridium phytofermentans (strain ATCC 700394 / DSM 18823 / ISDg) (Clostridium phytofermentans), this protein is Phosphoglucosamine mutase.